Here is a 141-residue protein sequence, read N- to C-terminus: Large ribosomal subunit protein uL11 (141 aa).

Belongs to the universal ribosomal protein uL11 family. Part of the ribosomal stalk of the 50S ribosomal subunit. Interacts with L10 and the large rRNA to form the base of the stalk. L10 forms an elongated spine to which L12 dimers bind in a sequential fashion forming a multimeric L10(L12)X complex. In terms of processing, one or more lysine residues are methylated.

Forms part of the ribosomal stalk which helps the ribosome interact with GTP-bound translation factors. The chain is Large ribosomal subunit protein uL11 from Alkaliphilus oremlandii (strain OhILAs) (Clostridium oremlandii (strain OhILAs)).